The sequence spans 602 residues: Elongation factor 4 (602 aa).

The 183-residue stretch at 7–189 folds into the tr-type G domain; it reads ARLRNFCIIA…SVVDRIPPPK (183 aa). GTP-binding positions include 19 to 24 and 136 to 139; these read DHGKST and NKVD.

This sequence belongs to the TRAFAC class translation factor GTPase superfamily. Classic translation factor GTPase family. LepA subfamily.

The protein localises to the cell inner membrane. It carries out the reaction GTP + H2O = GDP + phosphate + H(+). In terms of biological role, required for accurate and efficient protein synthesis under certain stress conditions. May act as a fidelity factor of the translation reaction, by catalyzing a one-codon backward translocation of tRNAs on improperly translocated ribosomes. Back-translocation proceeds from a post-translocation (POST) complex to a pre-translocation (PRE) complex, thus giving elongation factor G a second chance to translocate the tRNAs correctly. Binds to ribosomes in a GTP-dependent manner. In Prochlorococcus marinus (strain SARG / CCMP1375 / SS120), this protein is Elongation factor 4.